We begin with the raw amino-acid sequence, 272 residues long: Cytochrome b-c1 complex subunit Rieske-1, mitochondrial (272 aa).

Residues 1 to 60 (MLRVAGRRLFSVSQRSSTATSFVVSRDHTLSDGGGDSSSAPRSLPSADLSSYHRSLIRGF) constitute a mitochondrion transit peptide. The tract at residues 27 to 46 (DHTLSDGGGDSSSAPRSLPS) is disordered. Over 61–109 (SSQVLAQGNEIGFGSEVPATVEAVKTPNSKIVYDDHNHERYPPGDPSKR) the chain is Mitochondrial matrix. Residues 110-132 (AFAYFVLSGGRFVYASVLRLLVL) form a helical membrane-spanning segment. Residues 133 to 272 (KLIVSMSASK…FLEENKLLIG (140 aa)) are Mitochondrial intermembrane-facing. Residues 201 to 270 (VRVKNPEWLV…YSFLEENKLL (70 aa)) form the Rieske domain. [2Fe-2S] cluster-binding residues include Cys-215, His-217, Cys-234, and His-237. Cys-220 and Cys-236 are joined by a disulfide.

Belongs to the Rieske iron-sulfur protein family. As to quaternary structure, component of the ubiquinol-cytochrome c oxidoreductase (cytochrome b-c1 complex, complex III, CIII), a multisubunit enzyme composed of 10 subunits. The complex is composed of 3 respiratory subunits cytochrome b (MT-CYB), cytochrome c1 (CYC1-1 or CYC1-2) and Rieske protein (UCR1-1 or UCR1-2), 2 core protein subunits MPPalpha1 (or MPPalpha2) and MPPB, and 5 low-molecular weight protein subunits QCR7-1 (or QCR7-2), UCRQ-1 (or UCRQ-2), QCR9, UCRY and probably QCR6-1 (or QCR6-2). The complex exists as an obligatory dimer and forms supercomplexes (SCs) in the inner mitochondrial membrane with NADH-ubiquinone oxidoreductase (complex I, CI), resulting in different assemblies (supercomplexes SCI(1)III(2) and SCI(2)III(4)). Requires [2Fe-2S] cluster as cofactor.

The protein resides in the mitochondrion inner membrane. The catalysed reaction is a quinol + 2 Fe(III)-[cytochrome c](out) = a quinone + 2 Fe(II)-[cytochrome c](out) + 2 H(+)(out). Functionally, component of the ubiquinol-cytochrome c oxidoreductase, a multisubunit transmembrane complex that is part of the mitochondrial electron transport chain which drives oxidative phosphorylation. The respiratory chain contains 3 multisubunit complexes succinate dehydrogenase (complex II, CII), ubiquinol-cytochrome c oxidoreductase (cytochrome b-c1 complex, complex III, CIII) and cytochrome c oxidase (complex IV, CIV), that cooperate to transfer electrons derived from NADH and succinate to molecular oxygen, creating an electrochemical gradient over the inner membrane that drives transmembrane transport and the ATP synthase. The cytochrome b-c1 complex catalyzes electron transfer from ubiquinol to cytochrome c, linking this redox reaction to translocation of protons across the mitochondrial inner membrane, with protons being carried across the membrane as hydrogens on the quinol. In the process called Q cycle, 2 protons are consumed from the matrix, 4 protons are released into the intermembrane space and 2 electrons are passed to cytochrome c. The Rieske protein is a catalytic core subunit containing a [2Fe-2S] iron-sulfur cluster. It cycles between 2 conformational states during catalysis to transfer electrons from the quinol bound in the Q(0) site in cytochrome b to cytochrome c1. The sequence is that of Cytochrome b-c1 complex subunit Rieske-1, mitochondrial from Arabidopsis thaliana (Mouse-ear cress).